A 264-amino-acid polypeptide reads, in one-letter code: S-methyl-5'-thioadenosine phosphorylase (264 aa).

Phosphate contacts are provided by residues Ser14 and 55 to 56; that span reads RH. Met180 contacts substrate. Thr181 provides a ligand contact to phosphate. 204–206 contacts substrate; that stretch reads DVD.

This sequence belongs to the PNP/MTAP phosphorylase family. MTAP subfamily. In terms of assembly, homodimer.

It catalyses the reaction S-methyl-5'-thioadenosine + phosphate = 5-(methylsulfanyl)-alpha-D-ribose 1-phosphate + adenine. It participates in amino-acid biosynthesis; L-methionine biosynthesis via salvage pathway; S-methyl-5-thio-alpha-D-ribose 1-phosphate from S-methyl-5'-thioadenosine (phosphorylase route): step 1/1. Not inhibited by adenosine, potently inhibited by MT-DADMe-immucillin A. Its function is as follows. Catalyzes the reversible phosphorylation of S-methyl-5'-thioadenosine (MTA) to adenine and 5-methylthioribose-1-phosphate. Involved in the breakdown of MTA, a major by-product of polyamine biosynthesis. Responsible for the first step in the methionine salvage pathway after MTA has been generated from S-adenosylmethionine. Prefers MTA, with 2% activity on adenosine, 0.8% activity on S-adenosyl-L-homocysteine and no activity on other tested nucleosides. This is S-methyl-5'-thioadenosine phosphorylase from Mycobacterium tuberculosis (strain ATCC 25618 / H37Rv).